The sequence spans 200 residues: Riboflavin synthase (200 aa).

Lumazine-binding repeat units follow at residues Met1–His97 and Leu98–Val190. Residues Gly4–Ile6, Cys48–Thr50, Asp62–Thr67, Gly101–Val103, Lys132, Ser141–Thr143, and Gly155–Thr160 contribute to the 2,4-dihydroxypteridine site.

Homotrimer.

The catalysed reaction is 2 6,7-dimethyl-8-(1-D-ribityl)lumazine + H(+) = 5-amino-6-(D-ribitylamino)uracil + riboflavin. It participates in cofactor biosynthesis; riboflavin biosynthesis; riboflavin from 2-hydroxy-3-oxobutyl phosphate and 5-amino-6-(D-ribitylamino)uracil: step 2/2. Its function is as follows. Catalyzes the dismutation of two molecules of 6,7-dimethyl-8-ribityllumazine, resulting in the formation of riboflavin and 5-amino-6-(D-ribitylamino)uracil. The sequence is that of Riboflavin synthase (ribE) from Chlamydia pneumoniae (Chlamydophila pneumoniae).